The following is a 162-amino-acid chain: Large ribosomal subunit protein uL10 (162 aa).

Belongs to the universal ribosomal protein uL10 family. Part of the ribosomal stalk of the 50S ribosomal subunit. The N-terminus interacts with L11 and the large rRNA to form the base of the stalk. The C-terminus forms an elongated spine to which L12 dimers bind in a sequential fashion forming a multimeric L10(L12)X complex.

Forms part of the ribosomal stalk, playing a central role in the interaction of the ribosome with GTP-bound translation factors. The protein is Large ribosomal subunit protein uL10 (rplJ) of Borreliella burgdorferi (strain ATCC 35210 / DSM 4680 / CIP 102532 / B31) (Borrelia burgdorferi).